The sequence spans 396 residues: NADH-quinone oxidoreductase subunit D 1 (396 aa).

Belongs to the complex I 49 kDa subunit family. In terms of assembly, NDH-1 is composed of 14 different subunits. Subunits NuoB, C, D, E, F, and G constitute the peripheral sector of the complex.

The protein resides in the cell inner membrane. The catalysed reaction is a quinone + NADH + 5 H(+)(in) = a quinol + NAD(+) + 4 H(+)(out). Functionally, NDH-1 shuttles electrons from NADH, via FMN and iron-sulfur (Fe-S) centers, to quinones in the respiratory chain. The immediate electron acceptor for the enzyme in this species is believed to be ubiquinone. Couples the redox reaction to proton translocation (for every two electrons transferred, four hydrogen ions are translocated across the cytoplasmic membrane), and thus conserves the redox energy in a proton gradient. This chain is NADH-quinone oxidoreductase subunit D 1, found in Rhizobium etli (strain CIAT 652).